The primary structure comprises 254 residues: Alcohol dehydrogenase (254 aa).

NAD(+) is bound at residue 9-32 (IFVAGLGGIGLDTSRELVKRDLKN). Ser-138 contributes to the substrate binding site. The active-site Proton acceptor is the Tyr-151.

Belongs to the short-chain dehydrogenases/reductases (SDR) family. In terms of assembly, homodimer.

The catalysed reaction is a primary alcohol + NAD(+) = an aldehyde + NADH + H(+). It carries out the reaction a secondary alcohol + NAD(+) = a ketone + NADH + H(+). In Drosophila paulistorum (Fruit fly), this protein is Alcohol dehydrogenase (Adh).